Reading from the N-terminus, the 27-residue chain is Phospholipase A2 2 (27 aa).

The tract at residues 1–27 is disordered; sequence FMKVIDPGTKWCGPGNKAADDTDNGKN. Ca(2+) contacts are provided by tryptophan 11, glycine 13, and glycine 15. Positions 18–27 are enriched in basic and acidic residues; sequence AADDTDNGKN.

Belongs to the phospholipase A2 family. Ca(2+) serves as cofactor. Expressed by the venom gland.

The protein localises to the secreted. The enzyme catalyses a 1,2-diacyl-sn-glycero-3-phosphocholine + H2O = a 1-acyl-sn-glycero-3-phosphocholine + a fatty acid + H(+). Its function is as follows. PLA2 catalyzes the calcium-dependent hydrolysis of the 2-acyl groups in 3-sn-phosphoglycerides. This chain is Phospholipase A2 2, found in Opisthacanthus cayaporum (South American scorpion).